The sequence spans 102 residues: Putative pterin-4-alpha-carbinolamine dehydratase (102 aa).

It belongs to the pterin-4-alpha-carbinolamine dehydratase family.

It carries out the reaction (4aS,6R)-4a-hydroxy-L-erythro-5,6,7,8-tetrahydrobiopterin = (6R)-L-erythro-6,7-dihydrobiopterin + H2O. The protein is Putative pterin-4-alpha-carbinolamine dehydratase of Burkholderia ambifaria (strain ATCC BAA-244 / DSM 16087 / CCUG 44356 / LMG 19182 / AMMD) (Burkholderia cepacia (strain AMMD)).